We begin with the raw amino-acid sequence, 465 residues long: Spermidine/putrescine import ATP-binding protein PotA (465 aa).

Positions Met1–Arg18 are enriched in polar residues. Residues Met1–Asp21 form a disordered region. Residues Ile30–Ile264 form the ABC transporter domain. Gly66–Ser73 contributes to the ATP binding site.

This sequence belongs to the ABC transporter superfamily. Spermidine/putrescine importer (TC 3.A.1.11.1) family. As to quaternary structure, the complex is composed of two ATP-binding proteins (PotA), two transmembrane proteins (PotB and PotC) and a solute-binding protein (PotD).

The protein localises to the cell membrane. It catalyses the reaction ATP + H2O + polyamine-[polyamine-binding protein]Side 1 = ADP + phosphate + polyamineSide 2 + [polyamine-binding protein]Side 1.. Its function is as follows. Part of the ABC transporter complex PotABCD involved in spermidine/putrescine import. Responsible for energy coupling to the transport system. This Frankia alni (strain DSM 45986 / CECT 9034 / ACN14a) protein is Spermidine/putrescine import ATP-binding protein PotA.